We begin with the raw amino-acid sequence, 78 residues long: DNA-directed RNA polymerase subunit omega (78 aa).

It belongs to the RNA polymerase subunit omega family. In terms of assembly, in cyanobacteria the RNAP catalytic core is composed of 2 alpha, 1 beta, 1 beta', 1 gamma and 1 omega subunit. When a sigma factor is associated with the core the holoenzyme is formed, which can initiate transcription.

The catalysed reaction is RNA(n) + a ribonucleoside 5'-triphosphate = RNA(n+1) + diphosphate. Functionally, promotes RNA polymerase assembly. Latches the N- and C-terminal regions of the beta' subunit thereby facilitating its interaction with the beta and alpha subunits. This is DNA-directed RNA polymerase subunit omega from Prochlorococcus marinus (strain MIT 9301).